Reading from the N-terminus, the 355-residue chain is MSSHARGKELIPLLSFSHQKKQPNLSISSTTKMNKKNPDQKSDMSSSSSSPKKQTLFISSLIILWYTSNIGVLLLNKFLLSNYGFKFPIFLTMCHMSACAILSYVSIVFLKLVPLQYLKSRSQFLKVATLSIVFCASVVGGNISLRYLPVSFNQAVGATTPFFTALFAYIMTFKREAWVTYGALVPVVTGVVIASGGEPGFHWFGFIMCISATAARAFKSVLQGILLSSEGERLNSMNLMLYMSPIAVIALLPVTIFMEPDVMSVTLTLGRQHKYMYILLLVNSVMAYSANLLNFLVTKHTSALTLQVLGNAKGAVAVVISILLFRNPVTVMGIGGYSITVLGVVAYGETKRRFR.

The interval 19–51 (QKKQPNLSISSTTKMNKKNPDQKSDMSSSSSSP) is disordered. Polar residues predominate over residues 22 to 32 (QPNLSISSTTK). A run of 10 helical transmembrane segments spans residues 55-75 (TLFI…VLLL), 89-109 (IFLT…SIVF), 124-144 (FLKV…GNIS), 150-170 (VSFN…FAYI), 177-197 (AWVT…ASGG), 198-218 (EPGF…ARAF), 239-259 (LMLY…IFME), 277-297 (YILL…NFLV), 305-325 (TLQV…ILLF), and 328-348 (PVTV…VAYG).

This sequence belongs to the TPT transporter family. TPT (TC 2.A.7.9) subfamily.

Its subcellular location is the membrane. The chain is Probable sugar phosphate/phosphate translocator At3g10290 from Arabidopsis thaliana (Mouse-ear cress).